Reading from the N-terminus, the 226-residue chain is Type-5 uracil-DNA glycosylase (226 aa).

[4Fe-4S] cluster is bound by residues C23, C26, C125, and C140.

The protein belongs to the uracil-DNA glycosylase (UDG) superfamily. Type 5 (UDGb) family.

In terms of biological role, DNA glycosylase with broad substrate specificity. Can remove uracil from double-stranded DNA containing either a U/G or U/A base pair. Can also process hydroxymethyluracil (mispaired with guanine or adenine), hypoxanthine and fluorouracil. Exhibits a clear preference for double-stranded DNA substrates, but can also process uracil in single-stranded DNA, with lower efficiency. This chain is Type-5 uracil-DNA glycosylase, found in Pyrobaculum aerophilum (strain ATCC 51768 / DSM 7523 / JCM 9630 / CIP 104966 / NBRC 100827 / IM2).